Here is a 219-residue protein sequence, read N- to C-terminus: Protein GrpE (219 aa).

2 disordered regions span residues 1-32 (MSTTDNTNGDDRRPGQPEWDDEENNFEHLDAT) and 59-87 (FDGVDASTEDPGATVGETSTLESELAERT).

Belongs to the GrpE family. In terms of assembly, homodimer.

The protein resides in the cytoplasm. Functionally, participates actively in the response to hyperosmotic and heat shock by preventing the aggregation of stress-denatured proteins, in association with DnaK and GrpE. It is the nucleotide exchange factor for DnaK and may function as a thermosensor. Unfolded proteins bind initially to DnaJ; upon interaction with the DnaJ-bound protein, DnaK hydrolyzes its bound ATP, resulting in the formation of a stable complex. GrpE releases ADP from DnaK; ATP binding to DnaK triggers the release of the substrate protein, thus completing the reaction cycle. Several rounds of ATP-dependent interactions between DnaJ, DnaK and GrpE are required for fully efficient folding. The polypeptide is Protein GrpE (Corynebacterium diphtheriae (strain ATCC 700971 / NCTC 13129 / Biotype gravis)).